The chain runs to 274 residues: MAAAQTSPAATLVDVLTKPWSLDQTDSYMSTFVPLSYKIMIGYLVTIYFGQKLMAHRKPFDLQNTLALWNFGFSLFSGIAAYKLIPELFGVFMKDGFVASYCQNENYYTDASTGFWGWAFVMSKAPELGDTMFLVLRKKPVIFMHWYHHALTFVYAVVTYSEHQAWARWSLALNLAVHTVMYFYFAVRALNIQTPRPVAKFITTIQIVQFVISCYIFGHLVFIKSADSVPGCAVSWNVLSIGGLMYISYLFLFAKFFYKAYIQKRSPTKTSKQE.

7 helical membrane passes run 29 to 49, 73 to 93, 115 to 135, 140 to 160, 170 to 190, 201 to 221, and 238 to 258; these read MSTFVPLSYKIMIGYLVTIYF, FSLFSGIAAYKLIPELFGVFM, FWGWAFVMSKAPELGDTMFLV, PVIFMHWYHHALTFVYAVVTY, SLALNLAVHTVMYFYFAVRAL, FITTIQIVQFVISCYIFGHLV, and VLSIGGLMYISYLFLFAKFFY.

This sequence belongs to the ELO family. Expressed in various tissues and parts of the body, including the ventral cord, pharyngeal muscles, uterus, and the tail, and most strongly in intestinal cells.

Its subcellular location is the membrane. It carries out the reaction hexadecanoyl-CoA + malonyl-CoA + H(+) = 3-oxooctadecanoyl-CoA + CO2 + CoA. It functions in the pathway lipid metabolism; fatty acid biosynthesis. Its function is as follows. Catalyzes the first and rate-limiting reaction of the four reactions that constitute the long-chain fatty acids elongation cycle. Uses malonyl-CoA to add 2 carbons per cycle to the chain of long-chain fatty acids. Condensing enzyme responsible for the elongation of palmitate (hexadecanoate, 16:0), also involved in polyunsaturated fatty acid (PUFA) biosynthesis. This chain is Long chain fatty acid elongase 2, found in Caenorhabditis elegans.